The sequence spans 137 residues: ATP synthase epsilon chain (137 aa).

This sequence belongs to the ATPase epsilon chain family. In terms of assembly, F-type ATPases have 2 components, CF(1) - the catalytic core - and CF(0) - the membrane proton channel. CF(1) has five subunits: alpha(3), beta(3), gamma(1), delta(1), epsilon(1). CF(0) has three main subunits: a, b and c.

The protein localises to the cell membrane. Produces ATP from ADP in the presence of a proton gradient across the membrane. The polypeptide is ATP synthase epsilon chain (Streptococcus agalactiae serotype III (strain NEM316)).